Reading from the N-terminus, the 348-residue chain is MHFLDQAKIFIKSGDGGPGAVSFRREKYIEYGGPDGGNGGKGGDIVFEAVAGLNTLIDFRYTQHFKAKRGTPGAGRDRTGAGGPDLVIQVPVGTQILADDEERTLLADLTKAGERVHFLRGGDGGRGNASYKTSTNRAPRQHGPGWPGEEMWVWLRLKLLADAGLVGLPNAGKSTFINAVTNAQAKVGAYAFTTLRPQLGVVSHKGHEFVIADIPGLIEGAAEGAGVGDRFLGHIERCRVLLHLVDANDADVATSYRVVRDELEAYGADLIDKPVIVALNKIDTLDDELIAALSAELEAESGHPVMALSGASGAGIEPVLDKLLEAIGQPEPGPDADEEEKGGDWSPI.

One can recognise an Obg domain in the interval 1 to 160; that stretch reads MHFLDQAKIF…MWVWLRLKLL (160 aa). A disordered region spans residues 120–145; it reads RGGDGGRGNASYKTSTNRAPRQHGPG. The region spanning 161–328 is the OBG-type G domain; the sequence is ADAGLVGLPN…VLDKLLEAIG (168 aa). Residues 167-174, 192-196, 213-216, 280-283, and 309-311 contribute to the GTP site; these read GLPNAGKS, FTTLR, DIPG, NKID, and SGA. S174 and T194 together coordinate Mg(2+). Residues 326–348 are disordered; sequence AIGQPEPGPDADEEEKGGDWSPI.

It belongs to the TRAFAC class OBG-HflX-like GTPase superfamily. OBG GTPase family. As to quaternary structure, monomer. Requires Mg(2+) as cofactor.

Its subcellular location is the cytoplasm. An essential GTPase which binds GTP, GDP and possibly (p)ppGpp with moderate affinity, with high nucleotide exchange rates and a fairly low GTP hydrolysis rate. Plays a role in control of the cell cycle, stress response, ribosome biogenesis and in those bacteria that undergo differentiation, in morphogenesis control. In Sphingopyxis alaskensis (strain DSM 13593 / LMG 18877 / RB2256) (Sphingomonas alaskensis), this protein is GTPase Obg.